The chain runs to 694 residues: Cyclic nucleotide-gated channel beta-3 (694 aa).

Residues 1-210 (MLKSLTVKFN…SIDSYTDRVY (210 aa)) are Cytoplasmic-facing. 2 disordered regions span residues 24–82 (CPNL…DPEC) and 146–177 (ENFPEVEASSQTAMSTNISPKQENNSKLKEHQ). Polar residues-rich tracts occupy residues 26–40 (NLSSLSQPTIAQGDN) and 153–168 (ASSQTAMSTNISPKQE). Residues 211–234 (LLWLLLVTIAYNWNCWLLPVRLVF) form a helical membrane-spanning segment. Over 235-241 (PCQTPDN) the chain is Extracellular. Residues 242–262 (KNYWIITDIVCDIIYLCDILL) traverse the membrane as a helical segment. Topologically, residues 263–291 (IQPRLQFVRGGEIIVDSNELKRNYRSSTK) are cytoplasmic. A helical membrane pass occupies residues 292–309 (FRMDVASLLPFEVLYIFF). Over 310–312 (GVN) the chain is Extracellular. A helical membrane pass occupies residues 313–327 (PIFRANRILKYTSFF). Over 328–340 (EFNHHLESIMDKA) the chain is Cytoplasmic. Positions 340-439 (AYVYRVIRTT…IGQMRDVIGA (100 aa)) are ion conduction pathway. The chain crosses the membrane as a helical span at residues 341 to 363 (YVYRVIRTTGYLLFLLHINACVY). At 364-385 (YWASDYEGIGSTKWVYNGEGNK) the chain is on the extracellular side. The next 2 helical transmembrane spans lie at 386-412 (YLRCFYWAVRTLITIGGLPEPQTSFEI) and 413-437 (VFQFLNFFSGVFVFSSLIGQMRDVI). Residues 399-402 (TIGG) form a selectivity filter region. At 438–694 (GAATANQNYF…KGKRKTTTQK (257 aa)) the chain is on the cytoplasmic side. The C-linker stretch occupies residues 442–518 (ANQNYFQACM…SIIDKVELFK (77 aa)). The cyclic nucleotide-binding domain stretch occupies residues 522–638 (TQMIYDLLLR…LLMKKAKILL (117 aa)). Positions 583, 584, 596, and 597 each coordinate 3',5'-cyclic GMP.

It belongs to the cyclic nucleotide-gated cation channel (TC 1.A.1.5) family. CNGB3 subfamily. In terms of assembly, forms heterotetrameric channels composed of CNGA3 and CNGB3 subunits with 3:1 stoichiometry. Small subset of retinal photoreceptor cells and testis.

The protein localises to the cell membrane. It carries out the reaction Ca(2+)(in) = Ca(2+)(out). It catalyses the reaction Na(+)(in) = Na(+)(out). The enzyme catalyses K(+)(in) = K(+)(out). The catalysed reaction is NH4(+)(in) = NH4(+)(out). It carries out the reaction Rb(+)(in) = Rb(+)(out). It catalyses the reaction Li(+)(in) = Li(+)(out). The enzyme catalyses Cs(+)(in) = Cs(+)(out). Its function is as follows. Pore-forming subunit of the cone cyclic nucleotide-gated channel. Mediates cone photoresponses at bright light converting transient changes in intracellular cGMP levels into electrical signals. In the dark, cGMP levels are high and keep the channel open enabling a steady inward current carried by Na(+) and Ca(2+) ions that leads to membrane depolarization and neurotransmitter release from synaptic terminals. Upon photon absorption cGMP levels decline leading to channel closure and membrane hyperpolarization that ultimately slows neurotransmitter release and signals the presence of light, the end point of the phototransduction cascade. Conducts cGMP- and cAMP-gated ion currents, with permeability for monovalent and divalent cations. This chain is Cyclic nucleotide-gated channel beta-3, found in Mus musculus (Mouse).